Reading from the N-terminus, the 195-residue chain is MKTALLSLILFSCHIWAVKHQAKKCTEDRECEEIWPGSTCQRARCRCPENYVRRKSPSREWVCLSVNDAATGQVGPPLTCPLPDGAGYQVILRGSSTNNLLSPPVLCSSKTNDCETGYECIQGLSPVDGLDGACCPDQITTCAHPIFDHESGTLERWGFDGSECVKFKWDPEKPSSANNFKTKLQCESYCVNIFA.

Residues 1-17 form the signal peptide; that stretch reads MKTALLSLILFSCHIWA. A BPTI/Kunitz inhibitor domain is found at 120-190; that stretch reads CIQGLSPVDG…KTKLQCESYC (71 aa). 2 cysteine pairs are disulfide-bonded: C120/C190 and C164/C186.

Its function is as follows. Appears to lack serine protease inhibitor activity in vitro when tested with bovine pancreatic alpha-chymotrypsin and elastase. May be involved in cuticle biosynthesis. This is Kunitz-type protein bli-5 from Haemonchus contortus (Barber pole worm).